We begin with the raw amino-acid sequence, 261 residues long: 5'-nucleotidase SurE (261 aa).

Positions 12, 13, 43, and 99 each coordinate a divalent metal cation.

Belongs to the SurE nucleotidase family. A divalent metal cation is required as a cofactor.

It localises to the cytoplasm. The enzyme catalyses a ribonucleoside 5'-phosphate + H2O = a ribonucleoside + phosphate. Nucleotidase that shows phosphatase activity on nucleoside 5'-monophosphates. In Polynucleobacter asymbioticus (strain DSM 18221 / CIP 109841 / QLW-P1DMWA-1) (Polynucleobacter necessarius subsp. asymbioticus), this protein is 5'-nucleotidase SurE.